The primary structure comprises 312 residues: tRNA pseudouridine synthase B (312 aa).

Asp46 (nucleophile) is an active-site residue. The substrate site is built by Tyr74, Tyr177, and Leu198.

Belongs to the pseudouridine synthase TruB family. Type 1 subfamily.

The enzyme catalyses uridine(55) in tRNA = pseudouridine(55) in tRNA. In terms of biological role, responsible for synthesis of pseudouridine from uracil-55 in the psi GC loop of transfer RNAs. The polypeptide is tRNA pseudouridine synthase B (Buchnera aphidicola subsp. Acyrthosiphon pisum (strain APS) (Acyrthosiphon pisum symbiotic bacterium)).